Consider the following 379-residue polypeptide: Protein RecA (379 aa).

The span at 1-14 (MSNEIKSISSSNSS) shows a compositional bias: low complexity. A disordered region spans residues 1-24 (MSNEIKSISSSNSSCPPNEARSGE). 84-91 (GPESSGKT) is an ATP binding site.

Belongs to the RecA family.

Its subcellular location is the cytoplasm. Functionally, can catalyze the hydrolysis of ATP in the presence of single-stranded DNA, the ATP-dependent uptake of single-stranded DNA by duplex DNA, and the ATP-dependent hybridization of homologous single-stranded DNAs. It interacts with LexA causing its activation and leading to its autocatalytic cleavage. In Prochlorococcus marinus (strain SARG / CCMP1375 / SS120), this protein is Protein RecA.